Reading from the N-terminus, the 785-residue chain is MQFSEQWLRSWVNPALNTEQLSDLLTMAGLEVEETVAAAPAFSGVVIAEVKECVKHENADRLRVTKVDAGTGELIQIVCGAPNVAVGVRVPCALPGAVLPGEFKIKPTKMRGVESNGMLCSGKELGVPEDVDGLMLLPADAPVGQSIRDYLGLDDQLFTLKITPNRADSLSIRGIAREVAALTGAELKPVAIEPVAPSIDDVRPVKIESRQACGRYLGRVVKGVNAAAPTPAWMRRRLERSGLRSISAIVDITNYILLEQGQPMHAFDLAKIDGGITVRQARAGESLLCLNEKTVELQPKHLVIADDAKPLAMGGIMGGEHSGVTVASHDIFLESAFFAPEAIAGKARELGFGSDSSYRYERGVDFALQRDAIERATRLVLEICGGQAGPVVEEVAELPKRQAVQLRAARVAKVLGVAMSAERIGDILSRLSLSYTLADEVFTVQAPSFRFDIEIEEDLIEEVARVYGYNNIPADAPRSGMRMLAQPEDKRPVDQLRHLLAGRDYQEVVSYAFVDERWERDFAGNDNPIRLQNPIASQMSVMRSTLIGGLVDVLAGNINRKQPRVRLFEVARVFLRGGNGFDQPEKVAGLVWGPRLAEQWAAKSERVDFFDVKADVEALLHPIKAEYRKAAHPAFHPGRCAEVRVDGKAVGVIGELHPQWVQAYGLINAPVLFELDLAAAIARGRIKAQPVSKFQPVRRDLALLVDEAVTVAQLLSAFAAKRAEIVADIALFDVYRGKGVAEGKKSLAFSVLMQDNSRTLTDEDVEPAMQALLEAASELGAQLRV.

The tRNA-binding domain maps to 39 to 148 (APAFSGVVIA…ADAPVGQSIR (110 aa)). The B5 domain maps to 399 to 474 (PKRQAVQLRA…RVYGYNNIPA (76 aa)). Mg(2+)-binding residues include D452, D458, E461, and E462. One can recognise an FDX-ACB domain in the interval 692–784 (SKFQPVRRDL…AASELGAQLR (93 aa)).

It belongs to the phenylalanyl-tRNA synthetase beta subunit family. Type 1 subfamily. Tetramer of two alpha and two beta subunits. The cofactor is Mg(2+).

It localises to the cytoplasm. The catalysed reaction is tRNA(Phe) + L-phenylalanine + ATP = L-phenylalanyl-tRNA(Phe) + AMP + diphosphate + H(+). This is Phenylalanine--tRNA ligase beta subunit from Chromobacterium violaceum (strain ATCC 12472 / DSM 30191 / JCM 1249 / CCUG 213 / NBRC 12614 / NCIMB 9131 / NCTC 9757 / MK).